The sequence spans 283 residues: ATP phosphoribosyltransferase (283 aa).

This sequence belongs to the ATP phosphoribosyltransferase family. Long subfamily. Mg(2+) is required as a cofactor.

It localises to the cytoplasm. The catalysed reaction is 1-(5-phospho-beta-D-ribosyl)-ATP + diphosphate = 5-phospho-alpha-D-ribose 1-diphosphate + ATP. It functions in the pathway amino-acid biosynthesis; L-histidine biosynthesis; L-histidine from 5-phospho-alpha-D-ribose 1-diphosphate: step 1/9. Its activity is regulated as follows. Feedback inhibited by histidine. Catalyzes the condensation of ATP and 5-phosphoribose 1-diphosphate to form N'-(5'-phosphoribosyl)-ATP (PR-ATP). Has a crucial role in the pathway because the rate of histidine biosynthesis seems to be controlled primarily by regulation of HisG enzymatic activity. In Bifidobacterium longum (strain NCC 2705), this protein is ATP phosphoribosyltransferase.